Consider the following 291-residue polypeptide: ATP synthase gamma chain (291 aa).

The protein belongs to the ATPase gamma chain family. As to quaternary structure, F-type ATPases have 2 components, CF(1) - the catalytic core - and CF(0) - the membrane proton channel. CF(1) has five subunits: alpha(3), beta(3), gamma(1), delta(1), epsilon(1). CF(0) has three main subunits: a, b and c.

The protein resides in the cell membrane. Produces ATP from ADP in the presence of a proton gradient across the membrane. The gamma chain is believed to be important in regulating ATPase activity and the flow of protons through the CF(0) complex. This Buchnera aphidicola subsp. Schizaphis graminum (strain Sg) protein is ATP synthase gamma chain.